A 273-amino-acid polypeptide reads, in one-letter code: Formamidopyrimidine-DNA glycosylase (273 aa).

P2 acts as the Schiff-base intermediate with DNA in catalysis. E3 (proton donor) is an active-site residue. K57 functions as the Proton donor; for beta-elimination activity in the catalytic mechanism. Residues H91, R110, and K151 each contribute to the DNA site. The FPG-type zinc-finger motif lies at 236–270 (QVYGRKDEACNDCGTIIEAKVIGQRNSYFCPHCQM). R260 acts as the Proton donor; for delta-elimination activity in catalysis.

This sequence belongs to the FPG family. Monomer. Requires Zn(2+) as cofactor.

It carries out the reaction Hydrolysis of DNA containing ring-opened 7-methylguanine residues, releasing 2,6-diamino-4-hydroxy-5-(N-methyl)formamidopyrimidine.. It catalyses the reaction 2'-deoxyribonucleotide-(2'-deoxyribose 5'-phosphate)-2'-deoxyribonucleotide-DNA = a 3'-end 2'-deoxyribonucleotide-(2,3-dehydro-2,3-deoxyribose 5'-phosphate)-DNA + a 5'-end 5'-phospho-2'-deoxyribonucleoside-DNA + H(+). In terms of biological role, involved in base excision repair of DNA damaged by oxidation or by mutagenic agents. Acts as a DNA glycosylase that recognizes and removes damaged bases. Has a preference for oxidized purines, such as 7,8-dihydro-8-oxoguanine (8-oxoG). Has AP (apurinic/apyrimidinic) lyase activity and introduces nicks in the DNA strand. Cleaves the DNA backbone by beta-delta elimination to generate a single-strand break at the site of the removed base with both 3'- and 5'-phosphates. In Actinobacillus pleuropneumoniae serotype 5b (strain L20), this protein is Formamidopyrimidine-DNA glycosylase.